The chain runs to 372 residues: NAD(P)H-quinone oxidoreductase subunit 1 (372 aa).

8 helical membrane-spanning segments follow: residues 28 to 48, 97 to 117, 130 to 150, 176 to 196, 204 to 224, 265 to 285, 308 to 328, and 351 to 371; these read IWLPLPLLLMIIGATVGVLVV, WLFTLGPALVVIPVFLSYLIV, VGIFLWISLSSIAPIGLLMSG, LALAVLAIAMMSNSLSTIDIV, ILGWNIWRQPVGFLIFWIAAL, LVLSALIVSILYLGGWEFPIP, SLGIIMTLVKTYALVFIAVLL, and VALVNLLLTAALKLAFPIAFG.

It belongs to the complex I subunit 1 family. As to quaternary structure, NDH-1 is composed of at least 11 different subunits.

It localises to the cellular thylakoid membrane. The catalysed reaction is a plastoquinone + NADH + (n+1) H(+)(in) = a plastoquinol + NAD(+) + n H(+)(out). The enzyme catalyses a plastoquinone + NADPH + (n+1) H(+)(in) = a plastoquinol + NADP(+) + n H(+)(out). NDH-1 shuttles electrons from an unknown electron donor, via FMN and iron-sulfur (Fe-S) centers, to quinones in the respiratory and/or the photosynthetic chain. The immediate electron acceptor for the enzyme in this species is believed to be plastoquinone. Couples the redox reaction to proton translocation, and thus conserves the redox energy in a proton gradient. The polypeptide is NAD(P)H-quinone oxidoreductase subunit 1 (Picosynechococcus sp. (strain ATCC 27264 / PCC 7002 / PR-6) (Agmenellum quadruplicatum)).